The sequence spans 87 residues: UPF0250 protein YE3006 (87 aa).

It belongs to the UPF0250 family.

This is UPF0250 protein YE3006 from Yersinia enterocolitica serotype O:8 / biotype 1B (strain NCTC 13174 / 8081).